The following is a 364-amino-acid chain: Fructose-bisphosphate aldolase B (364 aa).

Residue Ala-2 is modified to N-acetylalanine. Lys-13 is modified (N6-succinyllysine). At Ser-36 the chain carries Phosphoserine. Thr-39 is modified (phosphothreonine). Arg-43 lines the beta-D-fructose 1,6-bisphosphate pocket. Ser-89 is subject to Phosphoserine. Thr-119 carries the phosphothreonine modification. Residue Lys-121 is modified to N6-succinyllysine. The residue at position 132 (Ser-132) is a Phosphoserine. Catalysis depends on Glu-188, which acts as the Proton acceptor. Lys-230 functions as the Schiff-base intermediate with dihydroxyacetone-P in the catalytic mechanism. Residues Ser-272, Ser-276, Ser-299, and Ser-301 each carry the phosphoserine modification. 272–274 (SGG) is a beta-D-fructose 1,6-bisphosphate binding site. Arg-304 lines the beta-D-fructose 1,6-bisphosphate pocket. Residue Ser-309 is modified to Phosphoserine. Lys-317 carries the post-translational modification N6-succinyllysine.

It belongs to the class I fructose-bisphosphate aldolase family. As to quaternary structure, homotetramer. Interacts with BBS1, BBS2, BBS4 and BBS7. Forms a ternary complex with G6PD and TP53; this interaction is direct.

The protein resides in the cytoplasm. The protein localises to the cytosol. It is found in the cytoskeleton. Its subcellular location is the microtubule organizing center. It localises to the centrosome. The protein resides in the centriolar satellite. It catalyses the reaction beta-D-fructose 1,6-bisphosphate = D-glyceraldehyde 3-phosphate + dihydroxyacetone phosphate. It carries out the reaction beta-D-fructose 1-phosphate = D-glyceraldehyde + dihydroxyacetone phosphate. It participates in carbohydrate degradation; glycolysis; D-glyceraldehyde 3-phosphate and glycerone phosphate from D-glucose: step 4/4. The protein operates within carbohydrate biosynthesis; gluconeogenesis. It functions in the pathway carbohydrate metabolism; fructose metabolism. Catalyzes the aldol cleavage of fructose 1,6-biphosphate to form two triosephosphates dihydroxyacetone phosphate and D-glyceraldehyde 3-phosphate in glycolysis as well as the reverse stereospecific aldol addition reaction in gluconeogenesis. In fructolysis, metabolizes fructose 1-phosphate derived from the phosphorylation of dietary fructose by fructokinase into dihydroxyacetone phosphate and D-glyceraldehyde. Acts as an adapter independently of its enzymatic activity, exerts a tumor suppressor role by stabilizing the ternary complex with G6PD and TP53 to inhibit G6PD activity and keep oxidative pentose phosphate metabolism in check. In Homo sapiens (Human), this protein is Fructose-bisphosphate aldolase B.